We begin with the raw amino-acid sequence, 318 residues long: Thymidylate synthase (318 aa).

Residues arginine 25 and 180 to 181 each bind dUMP; that span reads RR. The active-site Nucleophile is the cysteine 200. DUMP contacts are provided by residues 220–223, asparagine 231, and 261–263; these read RSGD and HIY. Aspartate 223 lines the (6R)-5,10-methylene-5,6,7,8-tetrahydrofolate pocket. Alanine 317 is a binding site for (6R)-5,10-methylene-5,6,7,8-tetrahydrofolate.

Belongs to the thymidylate synthase family. Bacterial-type ThyA subfamily. Homodimer.

The protein localises to the cytoplasm. It catalyses the reaction dUMP + (6R)-5,10-methylene-5,6,7,8-tetrahydrofolate = 7,8-dihydrofolate + dTMP. The protein operates within pyrimidine metabolism; dTTP biosynthesis. In terms of biological role, catalyzes the reductive methylation of 2'-deoxyuridine-5'-monophosphate (dUMP) to 2'-deoxythymidine-5'-monophosphate (dTMP) while utilizing 5,10-methylenetetrahydrofolate (mTHF) as the methyl donor and reductant in the reaction, yielding dihydrofolate (DHF) as a by-product. This enzymatic reaction provides an intracellular de novo source of dTMP, an essential precursor for DNA biosynthesis. This Lactobacillus delbrueckii subsp. bulgaricus (strain ATCC BAA-365 / Lb-18) protein is Thymidylate synthase.